The following is a 34-amino-acid chain: Protamine (34 aa).

Positions 1 to 34 (PRRRRQASRPVRRRRRTRRSTAERRRRRVVRRRR) are disordered.

As to expression, testis.

Its subcellular location is the nucleus. The protein localises to the chromosome. Its function is as follows. Protamines substitute for histones in the chromatin of sperm during the haploid phase of spermatogenesis. They compact sperm DNA into a highly condensed, stable and inactive complex. This chain is Protamine, found in Dicentrarchus labrax (European seabass).